Consider the following 349-residue polypeptide: Anthranilate phosphoribosyltransferase (349 aa).

Residues glycine 82, 85-86 (GD), 92-95 (NVST), 110-118 (KHGNRAVSG), and serine 122 contribute to the 5-phospho-alpha-D-ribose 1-diphosphate site. Anthranilate is bound at residue glycine 82. A Mg(2+)-binding site is contributed by serine 94. Asparagine 113 is a binding site for anthranilate. Anthranilate is bound at residue arginine 168. Residues aspartate 227 and glutamate 228 each coordinate Mg(2+).

The protein belongs to the anthranilate phosphoribosyltransferase family. As to quaternary structure, homodimer. Requires Mg(2+) as cofactor.

The catalysed reaction is N-(5-phospho-beta-D-ribosyl)anthranilate + diphosphate = 5-phospho-alpha-D-ribose 1-diphosphate + anthranilate. Its pathway is amino-acid biosynthesis; L-tryptophan biosynthesis; L-tryptophan from chorismate: step 2/5. Functionally, catalyzes the transfer of the phosphoribosyl group of 5-phosphorylribose-1-pyrophosphate (PRPP) to anthranilate to yield N-(5'-phosphoribosyl)-anthranilate (PRA). The sequence is that of Anthranilate phosphoribosyltransferase from Pseudomonas putida (strain ATCC 47054 / DSM 6125 / CFBP 8728 / NCIMB 11950 / KT2440).